The following is a 155-amino-acid chain: UPF0060 membrane protein MA_3936 (155 aa).

The next 3 membrane-spanning stretches (helical) occupy residues 8-28, 35-55, and 62-82; these read LCPF…ICLW, AVFG…PTFQ, and VYAA…LFVD.

This sequence belongs to the UPF0060 family.

It is found in the cell membrane. This is UPF0060 membrane protein MA_3936 from Methanosarcina acetivorans (strain ATCC 35395 / DSM 2834 / JCM 12185 / C2A).